A 718-amino-acid polypeptide reads, in one-letter code: Polyribonucleotide nucleotidyltransferase (718 aa).

2 residues coordinate Mg(2+): Asp491 and Asp497. The KH domain occupies 558 to 617 (PRMLTIKINPEKIRDVIGKGGATIRALTEETGTQIDISDDGTIVIASVDEGQAKEAQRRI). The S1 motif domain occupies 627–695 (GQVYDGSVLR…EKGRLRLSVK (69 aa)).

It belongs to the polyribonucleotide nucleotidyltransferase family. Requires Mg(2+) as cofactor.

The protein resides in the cytoplasm. It carries out the reaction RNA(n+1) + phosphate = RNA(n) + a ribonucleoside 5'-diphosphate. Its function is as follows. Involved in mRNA degradation. Catalyzes the phosphorolysis of single-stranded polyribonucleotides processively in the 3'- to 5'-direction. The sequence is that of Polyribonucleotide nucleotidyltransferase from Bordetella avium (strain 197N).